The following is a 445-amino-acid chain: Tubulin beta chain (445 aa).

The short motif at 1 to 4 (MREI) is the MREI motif element. Gln11 lines the GTP pocket. Ser40 is subject to Phosphoserine. Lys58 carries the N6-acetyllysine; alternate modification. Lys58 carries the post-translational modification N6-succinyllysine; alternate. Residue Lys58 forms a Glycyl lysine isopeptide (Lys-Gly) (interchain with G-Cter in ubiquitin); alternate linkage. Residues Glu69, Ser138, Gly142, Thr143, and Gly144 each coordinate GTP. Glu69 is a binding site for Mg(2+). Ser172 is modified (phosphoserine; by CDK1). 2 residues coordinate GTP: Asn204 and Asn226. Thr285 and Thr290 each carry phosphothreonine. Arg318 bears the Omega-N-methylarginine mark. A Glycyl lysine isopeptide (Lys-Gly) (interchain with G-Cter in ubiquitin) cross-link involves residue Lys324. Residues 424-445 (QYQDATADEQGEFEEEGEEDEA) are disordered. Positions 429–445 (TADEQGEFEEEGEEDEA) are enriched in acidic residues. The residue at position 438 (Glu438) is a 5-glutamyl polyglutamate.

The protein belongs to the tubulin family. As to quaternary structure, dimer of alpha and beta chains. A typical microtubule is a hollow water-filled tube with an outer diameter of 25 nm and an inner diameter of 15 nM. Alpha-beta heterodimers associate head-to-tail to form protofilaments running lengthwise along the microtubule wall with the beta-tubulin subunit facing the microtubule plus end conferring a structural polarity. Microtubules usually have 13 protofilaments but different protofilament numbers can be found in some organisms and specialized cells. Interacts with NCKAP5L. Mg(2+) is required as a cofactor. In terms of processing, some glutamate residues at the C-terminus are polyglycylated, resulting in polyglycine chains on the gamma-carboxyl group. Glycylation is mainly limited to tubulin incorporated into axonemes (cilia and flagella) whereas glutamylation is prevalent in neuronal cells, centrioles, axonemes, and the mitotic spindle. Both modifications can coexist on the same protein on adjacent residues, and lowering polyglycylation levels increases polyglutamylation, and reciprocally. Cilia and flagella glycylation is required for their stability and maintenance. Flagella glycylation controls sperm motility. Post-translationally, some glutamate residues at the C-terminus are polyglutamylated, resulting in polyglutamate chains on the gamma-carboxyl group. Polyglutamylation plays a key role in microtubule severing by spastin (SPAST). SPAST preferentially recognizes and acts on microtubules decorated with short polyglutamate tails: severing activity by SPAST increases as the number of glutamates per tubulin rises from one to eight, but decreases beyond this glutamylation threshold. Phosphorylated on Ser-172 by CDK1 during the cell cycle, from metaphase to telophase, but not in interphase. This phosphorylation inhibits tubulin incorporation into microtubules.

The protein resides in the cytoplasm. It is found in the cytoskeleton. Its function is as follows. Tubulin is the major constituent of microtubules, a cylinder consisting of laterally associated linear protofilaments composed of alpha- and beta-tubulin heterodimers. Microtubules grow by the addition of GTP-tubulin dimers to the microtubule end, where a stabilizing cap forms. Below the cap, tubulin dimers are in GDP-bound state, owing to GTPase activity of alpha-tubulin. The sequence is that of Tubulin beta chain from Sus scrofa (Pig).